We begin with the raw amino-acid sequence, 453 residues long: ATP-dependent protease ATPase subunit HslU (453 aa).

Residues Ile18, 60–65 (GVGKTE), Asp266, Glu331, and Arg403 contribute to the ATP site.

The protein belongs to the ClpX chaperone family. HslU subfamily. In terms of assembly, a double ring-shaped homohexamer of HslV is capped on each side by a ring-shaped HslU homohexamer. The assembly of the HslU/HslV complex is dependent on binding of ATP.

It is found in the cytoplasm. In terms of biological role, ATPase subunit of a proteasome-like degradation complex; this subunit has chaperone activity. The binding of ATP and its subsequent hydrolysis by HslU are essential for unfolding of protein substrates subsequently hydrolyzed by HslV. HslU recognizes the N-terminal part of its protein substrates and unfolds these before they are guided to HslV for hydrolysis. The protein is ATP-dependent protease ATPase subunit HslU of Desulforapulum autotrophicum (strain ATCC 43914 / DSM 3382 / VKM B-1955 / HRM2) (Desulfobacterium autotrophicum).